Reading from the N-terminus, the 62-residue chain is Large ribosomal subunit protein bL35 (62 aa).

The tract at residues 31 to 62 (HLAQNKTTKQKRQSRKSAQMHSSDLKRFKALI) is disordered. Basic and acidic residues predominate over residues 53–62 (SDLKRFKALI).

This sequence belongs to the bacterial ribosomal protein bL35 family.

In Mycoplasmopsis agalactiae (strain NCTC 10123 / CIP 59.7 / PG2) (Mycoplasma agalactiae), this protein is Large ribosomal subunit protein bL35.